The following is a 257-amino-acid chain: tRNA pseudouridine synthase A (257 aa).

Aspartate 52 acts as the Nucleophile in catalysis. Residue tyrosine 111 participates in substrate binding.

The protein belongs to the tRNA pseudouridine synthase TruA family. As to quaternary structure, homodimer.

It catalyses the reaction uridine(38/39/40) in tRNA = pseudouridine(38/39/40) in tRNA. In terms of biological role, formation of pseudouridine at positions 38, 39 and 40 in the anticodon stem and loop of transfer RNAs. This Dinoroseobacter shibae (strain DSM 16493 / NCIMB 14021 / DFL 12) protein is tRNA pseudouridine synthase A.